The chain runs to 384 residues: S-adenosylmethionine synthase (384 aa).

His15 is a binding site for ATP. Residue Asp17 participates in Mg(2+) binding. Glu43 is a K(+) binding site. The L-methionine site is built by Glu56 and Gln99. The segment at 99–109 (QSPDINQGVDR) is flexible loop. Residues 164–166 (DAK), 230–231 (RF), Asp239, 245–246 (RK), Ala262, and Lys266 contribute to the ATP site. Asp239 provides a ligand contact to L-methionine. Lys270 lines the L-methionine pocket.

It belongs to the AdoMet synthase family. In terms of assembly, homotetramer; dimer of dimers. Requires Mg(2+) as cofactor. It depends on K(+) as a cofactor.

Its subcellular location is the cytoplasm. It catalyses the reaction L-methionine + ATP + H2O = S-adenosyl-L-methionine + phosphate + diphosphate. The protein operates within amino-acid biosynthesis; S-adenosyl-L-methionine biosynthesis; S-adenosyl-L-methionine from L-methionine: step 1/1. Catalyzes the formation of S-adenosylmethionine (AdoMet) from methionine and ATP. The overall synthetic reaction is composed of two sequential steps, AdoMet formation and the subsequent tripolyphosphate hydrolysis which occurs prior to release of AdoMet from the enzyme. The protein is S-adenosylmethionine synthase of Yersinia pseudotuberculosis serotype IB (strain PB1/+).